A 242-amino-acid polypeptide reads, in one-letter code: ATP synthase subunit a (242 aa).

5 helical membrane passes run 21–41 (LSSI…AIIC), 79–99 (FHFL…LGLP), 116–136 (DATV…FYGV), 173–193 (LYGN…LVTG), and 198–218 (AWGW…SIFI).

It belongs to the ATPase A chain family. As to quaternary structure, F-type ATPases have 2 components, CF(1) - the catalytic core - and CF(0) - the membrane proton channel. CF(1) has five subunits: alpha(3), beta(3), gamma(1), delta(1), epsilon(1). CF(0) has three main subunits: a(1), b(2) and c(9-12). The alpha and beta chains form an alternating ring which encloses part of the gamma chain. CF(1) is attached to CF(0) by a central stalk formed by the gamma and epsilon chains, while a peripheral stalk is formed by the delta and b chains.

The protein resides in the cell membrane. Key component of the proton channel; it plays a direct role in the translocation of protons across the membrane. This chain is ATP synthase subunit a, found in Staphylococcus saprophyticus subsp. saprophyticus (strain ATCC 15305 / DSM 20229 / NCIMB 8711 / NCTC 7292 / S-41).